We begin with the raw amino-acid sequence, 583 residues long: MPLRKMKIPFLLLFFLWEAESHAASRPNIILVMADDLGIGDPGCYGNKTIRTPNIDRLASGGVKLTQHLAASPLCTPSRAAFMTGRYPVRSGMASWSRTGVFLFTASSGGLPTDEITFAKLLKDQGYSTALIGKWHLGMSCHSKTDFCHHPLHHGFNYFYGISLTNLRDCKPGEGSVFTTGFKRLVFLPLQIVGVTLLTLAALNCLGLLHVPLGVFFSLLFLAALILTLFLGFLHYFRPLNCFMMRNYEIIQQPMSYDNLTQRLTVEAAQFIQRNTETPFLLVLSYLHVHTALFSSKDFAGKSQHGVYGDAVEEMDWSVGQILNLLDELRLANDTLIYFTSDQGAHVEEVSSKGEIHGGSNGIYKGGKANNWEGGIRVPGILRWPRVIQAGQKIDEPTSNMDIFPTVAKLAGAPLPEDRIIDGRDLMPLLEGKSQRSDHEFLFHYCNAYLNAVRWHPQNSTSIWKAFFFTPNFNPVGSNGCFATHVCFCFGSYVTHHDPPLLFDISKDPRERNPLTPASEPRFYEILKVMQEAADRHTQTLPEVPDQFSWNNFLWKPWLQLCCPSTGLSCQCDREKQDKRLSR.

A signal peptide spans 1–21 (MPLRKMKIPFLLLFFLWEAES). Residues 22-184 (HAASRPNIIL…GSVFTTGFKR (163 aa)) are Lumenal-facing. The Ca(2+) site is built by Asp35 and Asp36. An N-linked (GlcNAc...) asparagine glycan is attached at Asn47. A Ca(2+)-binding site is contributed by Cys75. Catalysis depends on Cys75, which acts as the Nucleophile. At Cys75 the chain carries 3-oxoalanine (Cys). Residue His136 is part of the active site. Intrachain disulfides connect Cys141–Cys148 and Cys170–Cys242. Residues 185 to 208 (LVFLPLQIVGVTLLTLAALNCLGL) form a helical membrane-spanning segment. The Cytoplasmic segment spans residues 209-212 (LHVP). Residues 213–234 (LGVFFSLLFLAALILTLFLGFL) form a helical membrane-spanning segment. Topologically, residues 235 to 583 (HYFRPLNCFM…REKQDKRLSR (349 aa)) are lumenal. N-linked (GlcNAc...) asparagine glycosylation occurs at Asn259. Ca(2+) is bound by residues Asp342 and Gln343. 4 disulfide bridges follow: Cys446-Cys489, Cys481-Cys487, Cys562-Cys570, and Cys563-Cys572.

The protein belongs to the sulfatase family. In terms of assembly, homodimer. It depends on Ca(2+) as a cofactor. In terms of processing, the conversion to 3-oxoalanine (also known as C-formylglycine, FGly), of a serine or cysteine residue in prokaryotes and of a cysteine residue in eukaryotes, is critical for catalytic activity.

It is found in the cytoplasmic vesicle. It localises to the secretory vesicle. The protein resides in the microneme membrane. Its subcellular location is the endoplasmic reticulum membrane. The catalysed reaction is dehydroepiandrosterone 3-sulfate + H2O = 3beta-hydroxyandrost-5-en-17-one + sulfate + H(+). The enzyme catalyses estrone 3-sulfate + H2O = estrone + sulfate + H(+). Its function is as follows. Catalyzes the conversion of sulfated steroid precursors, such as dehydroepiandrosterone sulfate (DHEA-S) and estrone sulfate to the free steroid. The polypeptide is Steryl-sulfatase (STS) (Homo sapiens (Human)).